The primary structure comprises 413 residues: Variant surface glycoprotein YnAT 1.3 (413 aa).

Positions 1–22 are cleaved as a signal peptide; that stretch reads MLDNSRARSIVHLLILLKAHVI. Residues N91, N361, and N379 are each glycosylated (N-linked (GlcNAc...) asparagine). N379 carries GPI-anchor amidated asparagine lipidation. Positions 380–413 are cleaved as a propeptide — removed in mature form; the sequence is SSNPTSRQNSVVQEPTTVSAAAITPLILPWTLLI.

Its subcellular location is the cell membrane. Its function is as follows. VSG forms a coat on the surface of the parasite. The trypanosome evades the immune response of the host by expressing a series of antigenically distinct VSGs from an estimated 1000 VSG genes. The chain is Variant surface glycoprotein YnAT 1.3 from Trypanosoma congolense.